The following is an 85-amino-acid chain: Antibacterial factor-related peptide 2 (85 aa).

A signal peptide spans 1 to 17 (MFVRSLFLALLLATIVA). Positions 82 to 85 (IKRG) are excised as a propeptide.

In terms of tissue distribution, expressed in the pharynx (at protein level). Detected in pharyngeal neurons and secretory cells.

The protein resides in the secreted. Functionally, exhibits antimicrobial activity against the Gram-positive bacteria B.subtilis IFO 3134, K.varians MAFF 118076 and S.aureus ATCC 6538P, the Gram-negative bacteria A.tumefaciens MAFF 1001, B.bacteriovorus MAFF 106101 and K.pneumoniae MAFF 519002, and the yeasts C.krusei MAFF 114085, K.thermotolerans MAFF 113848 and T.delbrueckii MAFF 113811. This chain is Antibacterial factor-related peptide 2, found in Caenorhabditis elegans.